The chain runs to 186 residues: ATP synthase subunit delta (186 aa).

The protein belongs to the ATPase delta chain family. In terms of assembly, F-type ATPases have 2 components, F(1) - the catalytic core - and F(0) - the membrane proton channel. F(1) has five subunits: alpha(3), beta(3), gamma(1), delta(1), epsilon(1). F(0) has three main subunits: a(1), b(2) and c(10-14). The alpha and beta chains form an alternating ring which encloses part of the gamma chain. F(1) is attached to F(0) by a central stalk formed by the gamma and epsilon chains, while a peripheral stalk is formed by the delta and b chains.

The protein localises to the cell inner membrane. F(1)F(0) ATP synthase produces ATP from ADP in the presence of a proton or sodium gradient. F-type ATPases consist of two structural domains, F(1) containing the extramembraneous catalytic core and F(0) containing the membrane proton channel, linked together by a central stalk and a peripheral stalk. During catalysis, ATP synthesis in the catalytic domain of F(1) is coupled via a rotary mechanism of the central stalk subunits to proton translocation. In terms of biological role, this protein is part of the stalk that links CF(0) to CF(1). It either transmits conformational changes from CF(0) to CF(1) or is implicated in proton conduction. In Fuscovulum blasticum (Rhodobacter blasticus), this protein is ATP synthase subunit delta.